We begin with the raw amino-acid sequence, 298 residues long: Putative S-adenosyl-L-methionine-dependent methyltransferase MSMEG_1480/MSMEI_1444 (298 aa).

Residues Asp-127 and 156 to 157 (DL) each bind S-adenosyl-L-methionine.

The protein belongs to the UPF0677 family.

Exhibits S-adenosyl-L-methionine-dependent methyltransferase activity. This chain is Putative S-adenosyl-L-methionine-dependent methyltransferase MSMEG_1480/MSMEI_1444, found in Mycolicibacterium smegmatis (strain ATCC 700084 / mc(2)155) (Mycobacterium smegmatis).